Consider the following 360-residue polypeptide: Photosystem II protein D1 (360 aa).

3 consecutive transmembrane segments (helical) span residues tyrosine 29 to cysteine 46, histidine 118 to leucine 133, and tryptophan 142 to alanine 156. Histidine 118 contacts chlorophyll a. Tyrosine 126 is a binding site for pheophytin a. Aspartate 170 and glutamate 189 together coordinate [CaMn4O5] cluster. The helical transmembrane segment at phenylalanine 197–leucine 218 threads the bilayer. Histidine 198 provides a ligand contact to chlorophyll a. A quinone is bound by residues histidine 215 and serine 264–phenylalanine 265. Residue histidine 215 participates in Fe cation binding. Histidine 272 lines the Fe cation pocket. A helical membrane pass occupies residues phenylalanine 274–isoleucine 288. Residues histidine 332, glutamate 333, aspartate 342, and alanine 344 each coordinate [CaMn4O5] cluster. Positions serine 345–alanine 360 are excised as a propeptide.

The protein belongs to the reaction center PufL/M/PsbA/D family. As to quaternary structure, PSII is composed of 1 copy each of membrane proteins PsbA, PsbB, PsbC, PsbD, PsbE, PsbF, PsbH, PsbI, PsbJ, PsbK, PsbL, PsbM, PsbT, PsbX, PsbY, PsbZ, Psb30/Ycf12, at least 3 peripheral proteins of the oxygen-evolving complex and a large number of cofactors. It forms dimeric complexes. The D1/D2 heterodimer binds P680, chlorophylls that are the primary electron donor of PSII, and subsequent electron acceptors. It shares a non-heme iron and each subunit binds pheophytin, quinone, additional chlorophylls, carotenoids and lipids. D1 provides most of the ligands for the Mn4-Ca-O5 cluster of the oxygen-evolving complex (OEC). There is also a Cl(-1) ion associated with D1 and D2, which is required for oxygen evolution. The PSII complex binds additional chlorophylls, carotenoids and specific lipids. serves as cofactor. Tyr-161 forms a radical intermediate that is referred to as redox-active TyrZ, YZ or Y-Z. In terms of processing, C-terminally processed by CTPA; processing is essential to allow assembly of the oxygen-evolving complex and thus photosynthetic growth.

It is found in the plastid. The protein resides in the chloroplast thylakoid membrane. The enzyme catalyses 2 a plastoquinone + 4 hnu + 2 H2O = 2 a plastoquinol + O2. Photosystem II (PSII) is a light-driven water:plastoquinone oxidoreductase that uses light energy to abstract electrons from H(2)O, generating O(2) and a proton gradient subsequently used for ATP formation. It consists of a core antenna complex that captures photons, and an electron transfer chain that converts photonic excitation into a charge separation. The D1/D2 (PsbA/PsbD) reaction center heterodimer binds P680, the primary electron donor of PSII as well as several subsequent electron acceptors. This chain is Photosystem II protein D1, found in Cyanidioschyzon merolae (strain NIES-3377 / 10D) (Unicellular red alga).